We begin with the raw amino-acid sequence, 318 residues long: Solute carrier family 25 member 34 (318 aa).

3 Solcar repeats span residues 18-111, 115-208, and 218-309; these read VSPA…ACQA, QQPG…AKAW, and DSWL…LRKL. Transmembrane regions (helical) follow at residues 21–41, 59–79, 112–134, 184–205, 220–240, and 292–315; these read AVDL…TNPL, TYPR…RADG, GLTQ…GAFV, VGAA…FTSA, WLAT…VMAP, and LGPH…RAQH.

It belongs to the mitochondrial carrier (TC 2.A.29) family.

The protein localises to the mitochondrion inner membrane. The enzyme catalyses a dicarboxylate(in) + sulfate(out) = a dicarboxylate(out) + sulfate(in). Functionally, putative antiporter that exchanges dicarboxylates and sulfur oxoanions across the inner membrane of mitochondria. In Rattus norvegicus (Rat), this protein is Solute carrier family 25 member 34 (Slc25a34).